The following is a 497-amino-acid chain: Cytochrome P450 98A8 (497 aa).

Residues 2-19 (IIYLISLLPIIVATLMLY) form a helical membrane-spanning segment. Position 431 (Cys-431) interacts with heme.

This sequence belongs to the cytochrome P450 family. Heme is required as a cofactor. As to expression, strongly expressed in inflorescence tips, young flower buds, seeds, stamen, tapetum and pollen.

The protein resides in the membrane. Functionally, acts redundantly with CYP98A9 as tricoumaroylspermidine meta-hydroxylase. Also catalyzes the meta-hydroxylation of the three triferuloylspermidine phenolic rings. Unable to use 5-O-(4-coumaroyl) D-quinate or 5-O-(4-coumaroyl) shikimate as substrates. This is Cytochrome P450 98A8 (CYP98A8) from Arabidopsis thaliana (Mouse-ear cress).